The primary structure comprises 186 residues: Dual-action ribosomal maturation protein DarP (186 aa).

This sequence belongs to the DarP family.

It localises to the cytoplasm. Functionally, member of a network of 50S ribosomal subunit biogenesis factors which assembles along the 30S-50S interface, preventing incorrect 23S rRNA structures from forming. Promotes peptidyl transferase center (PTC) maturation. In Proteus mirabilis (strain HI4320), this protein is Dual-action ribosomal maturation protein DarP.